The primary structure comprises 736 residues: Phosphoribosylformylglycinamidine synthase subunit PurL (736 aa).

H50 is an active-site residue. 2 residues coordinate ATP: Y53 and K92. E94 contributes to the Mg(2+) binding site. Substrate contacts are provided by residues 95-98 and R117; that span reads SHNH. The active-site Proton acceptor is the H96. D118 is a binding site for Mg(2+). A substrate-binding site is contributed by Q241. D269 provides a ligand contact to Mg(2+). 313–315 serves as a coordination point for substrate; it reads ESQ. ATP-binding residues include D495 and G532. Mg(2+) is bound at residue N533. S535 is a substrate binding site.

It belongs to the FGAMS family. In terms of assembly, monomer. Part of the FGAM synthase complex composed of 1 PurL, 1 PurQ and 2 PurS subunits.

It is found in the cytoplasm. The catalysed reaction is N(2)-formyl-N(1)-(5-phospho-beta-D-ribosyl)glycinamide + L-glutamine + ATP + H2O = 2-formamido-N(1)-(5-O-phospho-beta-D-ribosyl)acetamidine + L-glutamate + ADP + phosphate + H(+). The protein operates within purine metabolism; IMP biosynthesis via de novo pathway; 5-amino-1-(5-phospho-D-ribosyl)imidazole from N(2)-formyl-N(1)-(5-phospho-D-ribosyl)glycinamide: step 1/2. In terms of biological role, part of the phosphoribosylformylglycinamidine synthase complex involved in the purines biosynthetic pathway. Catalyzes the ATP-dependent conversion of formylglycinamide ribonucleotide (FGAR) and glutamine to yield formylglycinamidine ribonucleotide (FGAM) and glutamate. The FGAM synthase complex is composed of three subunits. PurQ produces an ammonia molecule by converting glutamine to glutamate. PurL transfers the ammonia molecule to FGAR to form FGAM in an ATP-dependent manner. PurS interacts with PurQ and PurL and is thought to assist in the transfer of the ammonia molecule from PurQ to PurL. This Bartonella quintana (strain Toulouse) (Rochalimaea quintana) protein is Phosphoribosylformylglycinamidine synthase subunit PurL.